A 517-amino-acid chain; its full sequence is Cytochrome P450 monooxygenase bsc11 (517 aa).

The chain crosses the membrane as a helical span at residues 16 to 33; sequence ALPLTCTGLIIIFAFYLS. N204 carries an N-linked (GlcNAc...) asparagine glycan. C448 contacts heme.

Belongs to the cytochrome P450 family. Heme serves as cofactor.

The protein resides in the membrane. The protein operates within mycotoxin biosynthesis. In terms of biological role, cytochrome P450 monooxygenase; part of the gene cluster that mediates the biosynthesis of the diterpene glucoside brassicicene C. In the first step of the brassicicene C biosynthesis, the bifunctional diterpene synthase bsc8 that possesses both prenyl transferase and terpene cyclase activity, converts isopentenyl diphosphate and dimethylallyl diphosphate into geranylgeranyl diphosphate (GGDP) that is further converted into fusicocca-2,10(14)-diene, the first precursor for brassicicene C. Fusicocca-2,10(14)-diene is then substrate of cytochrome P450 monooxygenase bsc1 for hydroxylation at the C-8 position. Oxidation at C-16 position to aldehyde is then catalyzed by the cytochrome P450 monooyxygenase bsc7, yielding fusicocca-2,10(14)-diene-8-beta,16-diol. Follows the isomerization of the double bond and reduction of aldehyde to alcohol catalyzed by the short-chain dehydrogenase/reductase bsc3 to yield the diol compound fusicocca-1,10(14)-diene-8 beta,16-diol. The next step is the oxidation at the C-3 position of fusicocca-2,10(14)-diene-8-beta,16-diol catalyzed by the alpha-ketoglutarate dependent dioxygenase bsc9, to produce a triol compound. Methylation of the hydroxy group at position 16 is performed by the methyltransferase bsc6. 16-O-methylation is followed by oxidation at the C-13 position to ketone and an alkyl shift of the methyl group leads to brassicicene C. Although the probable acetyltransferase bsc4 is included in the gene cluster, no acetylation reactions are necessary for brassicicene C biosynthesis. However, the fact that brassicicene E, which is a structurally related compound having an acetoxy group at position 12, was previously isolated from another strain of A.brassicicola suggests that the ATCC 96836 strain might also produce a small amount of brassicicene E. The protein is Cytochrome P450 monooxygenase bsc11 of Alternaria brassicicola (Dark leaf spot agent).